Here is a 173-residue protein sequence, read N- to C-terminus: uncharacterized protein (173 aa).

This is an uncharacterized protein from Bacillus subtilis (strain 168).